Consider the following 182-residue polypeptide: NADH-quinone oxidoreductase subunit I (182 aa).

4Fe-4S ferredoxin-type domains lie at 50–82 (IILS…LQKA) and 92–121 (EFFR…MTPD). [4Fe-4S] cluster-binding residues include cysteine 62, cysteine 65, cysteine 68, cysteine 72, cysteine 101, cysteine 104, cysteine 107, and cysteine 111.

This sequence belongs to the complex I 23 kDa subunit family. NDH-1 is composed of 14 different subunits. Subunits NuoA, H, J, K, L, M, N constitute the membrane sector of the complex. Requires [4Fe-4S] cluster as cofactor.

The protein localises to the cell inner membrane. The enzyme catalyses a quinone + NADH + 5 H(+)(in) = a quinol + NAD(+) + 4 H(+)(out). NDH-1 shuttles electrons from NADH, via FMN and iron-sulfur (Fe-S) centers, to quinones in the respiratory chain. The immediate electron acceptor for the enzyme in this species is believed to be ubiquinone. Couples the redox reaction to proton translocation (for every two electrons transferred, four hydrogen ions are translocated across the cytoplasmic membrane), and thus conserves the redox energy in a proton gradient. The polypeptide is NADH-quinone oxidoreductase subunit I (Psychrobacter arcticus (strain DSM 17307 / VKM B-2377 / 273-4)).